Consider the following 467-residue polypeptide: tRNA modification GTPase MnmE (467 aa).

Arg-27, Glu-89, and Arg-128 together coordinate (6S)-5-formyl-5,6,7,8-tetrahydrofolate. The TrmE-type G domain maps to 225–387; the sequence is GISMVIAGRP…LKQAIFTVVT (163 aa). Residue Asn-235 participates in K(+) binding. GTP is bound by residues 235–240, 254–260, 279–282, and 368–370; these read NVGKSS, TSIAGTT, DTAG, and SAR. Position 239 (Ser-239) interacts with Mg(2+). Thr-254, Ile-256, and Thr-259 together coordinate K(+). Thr-260 serves as a coordination point for Mg(2+). A (6S)-5-formyl-5,6,7,8-tetrahydrofolate-binding site is contributed by Lys-467.

Belongs to the TRAFAC class TrmE-Era-EngA-EngB-Septin-like GTPase superfamily. TrmE GTPase family. Homodimer. Heterotetramer of two MnmE and two MnmG subunits. The cofactor is K(+).

It is found in the cytoplasm. Functionally, exhibits a very high intrinsic GTPase hydrolysis rate. Involved in the addition of a carboxymethylaminomethyl (cmnm) group at the wobble position (U34) of certain tRNAs, forming tRNA-cmnm(5)s(2)U34. The sequence is that of tRNA modification GTPase MnmE from Desulfotalea psychrophila (strain LSv54 / DSM 12343).